Consider the following 673-residue polypeptide: Annexin A6 (673 aa).

A2 carries the N-acetylalanine modification. Residue S13 is modified to Phosphoserine. Annexin repeat units lie at residues 20-91 (FNPS…GLMR), 92-163 (PPAY…VLLQ), 175-247 (DLVQ…AVVK), 251-322 (STAE…KLCG), 363-434 (FNPD…GLMM), 435-506 (PPAH…SLAT), 521-595 (EDAQ…AIVQ), and 599-670 (NKPL…AICG). Y30 is modified (phosphotyrosine). N6-acetyllysine occurs at positions 63, 68, 75, and 81. Y201 bears the Phosphotyrosine mark. N6-acetyllysine is present on residues K306, K370, and K418. S422 carries the phosphoserine modification. The residue at position 483 (K483) is an N6-acetyllysine. Phosphoserine is present on S537. Position 620 is an N6-acetyllysine (K620).

Belongs to the annexin family. Phosphorylated in response to growth factor stimulation.

The protein resides in the cytoplasm. The protein localises to the melanosome. Its function is as follows. May associate with CD21. May regulate the release of Ca(2+) from intracellular stores. The protein is Annexin A6 (ANXA6) of Bos taurus (Bovine).